The chain runs to 400 residues: Formate-dependent phosphoribosylglycinamide formyltransferase (400 aa).

N(1)-(5-phospho-beta-D-ribosyl)glycinamide contacts are provided by residues 22–23 and glutamate 82; that span reads EL. Residues arginine 115, lysine 157, 162 to 167, 197 to 200, and glutamate 205 contribute to the ATP site; these read SSGKGQ and EGFV. The ATP-grasp domain occupies 120-315; it reads RLAAETLGLP…EFELHARAIL (196 aa). Positions 274 and 286 each coordinate Mg(2+). N(1)-(5-phospho-beta-D-ribosyl)glycinamide is bound by residues aspartate 293, lysine 362, and 369 to 370; that span reads RR.

This sequence belongs to the PurK/PurT family. As to quaternary structure, homodimer.

The catalysed reaction is N(1)-(5-phospho-beta-D-ribosyl)glycinamide + formate + ATP = N(2)-formyl-N(1)-(5-phospho-beta-D-ribosyl)glycinamide + ADP + phosphate + H(+). It functions in the pathway purine metabolism; IMP biosynthesis via de novo pathway; N(2)-formyl-N(1)-(5-phospho-D-ribosyl)glycinamide from N(1)-(5-phospho-D-ribosyl)glycinamide (formate route): step 1/1. Functionally, involved in the de novo purine biosynthesis. Catalyzes the transfer of formate to 5-phospho-ribosyl-glycinamide (GAR), producing 5-phospho-ribosyl-N-formylglycinamide (FGAR). Formate is provided by PurU via hydrolysis of 10-formyl-tetrahydrofolate. This Mycolicibacterium vanbaalenii (strain DSM 7251 / JCM 13017 / BCRC 16820 / KCTC 9966 / NRRL B-24157 / PYR-1) (Mycobacterium vanbaalenii) protein is Formate-dependent phosphoribosylglycinamide formyltransferase.